Here is a 474-residue protein sequence, read N- to C-terminus: Cyclin-dependent kinase 18 (474 aa).

A phosphoserine mark is found at Ser14, Ser74, Ser89, Ser98, Ser117, and Ser132. The disordered stretch occupies residues 44-93 (NLQLGPLGRDPPQECSTFSPTDSGEEPGQLSPGVQFQRRQNQRRFSMEDV). The region spanning 144–425 (YVKLDKLGEG…AEAALSHSYF (282 aa)) is the Protein kinase domain. ATP-binding positions include 150-158 (LGEGTYATV) and Lys173. Asp265 functions as the Proton acceptor in the catalytic mechanism. Phosphoserine is present on residues Ser440 and Ser443.

Belongs to the protein kinase superfamily. CMGC Ser/Thr protein kinase family. CDC2/CDKX subfamily. Isoform 2 expression is limited to several subcortical nuclei of the basal gangli and the spinal cord. Isoform 1 is widely expressed.

The catalysed reaction is L-seryl-[protein] + ATP = O-phospho-L-seryl-[protein] + ADP + H(+). It carries out the reaction L-threonyl-[protein] + ATP = O-phospho-L-threonyl-[protein] + ADP + H(+). May play a role in signal transduction cascades in terminally differentiated cells. This Homo sapiens (Human) protein is Cyclin-dependent kinase 18 (CDK18).